The sequence spans 300 residues: Beta-lactamase (300 aa).

The first 29 residues, 1–29 (MTMFKTTFRQTATIAVSLISLLVSPMLWA), serve as a signal peptide directing secretion. The active-site Acyl-ester intermediate is Ser-75. Residue 239 to 241 (KTG) participates in substrate binding.

It belongs to the class-A beta-lactamase family. In terms of assembly, monomer.

The enzyme catalyses a beta-lactam + H2O = a substituted beta-amino acid. Hydrolyzes broad-spectrum beta-lactam antibiotics. Active against cephalosporins such as cefuroxime and cefotaxime. The protein is Beta-lactamase (blaB) of Proteus vulgaris.